The primary structure comprises 82 residues: Leucinostatins biosynthesis cluster protein M (82 aa).

A disordered region spans residues 34–82 (ARNETHDPSGPRAPVSSMRLGPRSRPYHHGTARLRGSPNCSRDSSSAAT). Polar residues predominate over residues 71–82 (PNCSRDSSSAAT).

Functionally, part of the gene cluster that mediates the biosynthesis of the lipopeptide antibiotics leucinostatins that show extensive biological activities, including antimalarial, antiviral, antibacterial, antifungal, and antitumor activities, as well as phytotoxic. The function of lcsM within the leucinostatins biosynthesis has not been identified yet. The protein is Leucinostatins biosynthesis cluster protein M of Purpureocillium lilacinum (Paecilomyces lilacinus).